A 323-amino-acid polypeptide reads, in one-letter code: Beta-ketoacyl-[acyl-carrier-protein] synthase III (323 aa).

Active-site residues include C114 and H250. An ACP-binding region spans residues Q251–R255. N280 is a catalytic residue.

The protein belongs to the thiolase-like superfamily. FabH family. Homodimer.

It is found in the cytoplasm. The catalysed reaction is malonyl-[ACP] + acetyl-CoA + H(+) = 3-oxobutanoyl-[ACP] + CO2 + CoA. Its pathway is lipid metabolism; fatty acid biosynthesis. Catalyzes the condensation reaction of fatty acid synthesis by the addition to an acyl acceptor of two carbons from malonyl-ACP. Catalyzes the first condensation reaction which initiates fatty acid synthesis and may therefore play a role in governing the total rate of fatty acid production. Possesses both acetoacetyl-ACP synthase and acetyl transacylase activities. Its substrate specificity determines the biosynthesis of branched-chain and/or straight-chain of fatty acids. The chain is Beta-ketoacyl-[acyl-carrier-protein] synthase III from Ruegeria pomeroyi (strain ATCC 700808 / DSM 15171 / DSS-3) (Silicibacter pomeroyi).